Here is a 340-residue protein sequence, read N- to C-terminus: Uroporphyrinogen decarboxylase (340 aa).

Substrate contacts are provided by residues 21–25 (RQAGR), Asp71, Tyr147, Ser202, and His316.

Belongs to the uroporphyrinogen decarboxylase family. As to quaternary structure, homodimer.

The protein resides in the cytoplasm. The enzyme catalyses uroporphyrinogen III + 4 H(+) = coproporphyrinogen III + 4 CO2. It participates in porphyrin-containing compound metabolism; protoporphyrin-IX biosynthesis; coproporphyrinogen-III from 5-aminolevulinate: step 4/4. Its function is as follows. Catalyzes the decarboxylation of four acetate groups of uroporphyrinogen-III to yield coproporphyrinogen-III. The polypeptide is Uroporphyrinogen decarboxylase (Nitratiruptor sp. (strain SB155-2)).